We begin with the raw amino-acid sequence, 153 residues long: Prostaglandin E synthase (153 aa).

The Lumenal segment spans residues 1-13; the sequence is MPPSGLELMNGQV. Residues 14–42 traverse the membrane as a helical segment; sequence LPAFLLCSALLVIKMYVVAVITGQVRLRK. Arginine 39 contacts glutathione. The Cytoplasmic portion of the chain corresponds to 43 to 61; sequence KAFANPEDAQRHGGLQYCR. The helical transmembrane segment at 62 to 91 threads the bilayer; the sequence is NDPDVERCLRAHRNDMETIYPFLFLGFVYS. 74–78 provides a ligand contact to glutathione; the sequence is RNDME. Topologically, residues 92 to 96 are lumenal; sequence FLGPN. Residues 97–120 form a helical membrane-spanning segment; that stretch reads PFVARMHFLVFFLGRMVHTVAYLG. Glutathione is bound by residues histidine 114 and tyrosine 118. Topologically, residues 121 to 124 are cytoplasmic; it reads KLRA. A helical membrane pass occupies residues 125–153; that stretch reads PTRSLAYTLAQLPCASMALQIVWEAARHL. 127–131 provides a ligand contact to glutathione; it reads RSLAY.

This sequence belongs to the MAPEG family. As to quaternary structure, homotrimer. It depends on glutathione as a cofactor.

The protein resides in the membrane. Its subcellular location is the cytoplasm. The protein localises to the perinuclear region. It catalyses the reaction prostaglandin H2 = prostaglandin E2. The catalysed reaction is 2-glyceryl-prostaglandin H2 = 2-glyceryl-prostaglandin E2. The enzyme catalyses prostaglandin G2 = (15S)-15-hydroperoxy-prostaglandin E2. It carries out the reaction 1-chloro-2,4-dinitrobenzene + glutathione = 2,4-dinitrophenyl-S-glutathione + chloride + H(+). It catalyses the reaction (5S)-hydroperoxy-(6E,8Z,11Z,14Z)-eicosatetraenoate + 2 glutathione = (5S)-hydroxy-(6E,8Z,11Z,14Z)-eicosatetraenoate + glutathione disulfide + H2O. It functions in the pathway lipid metabolism; prostaglandin biosynthesis. Its function is as follows. Terminal enzyme of the cyclooxygenase (COX)-2-mediated prostaglandin E2 (PGE2) biosynthetic pathway. Catalyzes the glutathione-dependent oxidoreduction of prostaglandin endoperoxide H2 (PGH2) to prostaglandin E2 (PGE2) in response to inflammatory stimuli. Plays a key role in inflammation response, fever and pain. Also catalyzes the oxidoreduction of endocannabinoids into prostaglandin glycerol esters and PGG2 into 15-hydroperoxy-PGE2. In addition, displays low glutathione transferase and glutathione-dependent peroxidase activities, toward 1-chloro-2,4-dinitrobenzene and 5-hydroperoxyicosatetraenoic acid (5-HPETE), respectively. The chain is Prostaglandin E synthase (PTGES) from Bos taurus (Bovine).